Consider the following 353-residue polypeptide: Protein MGF 360-9L (353 aa).

It belongs to the asfivirus MGF 360 family. Interacts with host STAT1; this interaction mediates STAT1 degradation through apoptosis. Interacts with host STAT2; this interaction mediates STAT2 degradation through the proteasome.

It localises to the host cytoplasm. Plays a role in virus cell tropism, and may be required for efficient virus replication in macrophages. In addition, inhibits IFN-beta-induced IFN-stimulated genes (ISGs) transcription. Mechanistically, degrades host STAT1 and STAT2 through apoptosis and ubiquitin-proteasome pathways respectively. The chain is Protein MGF 360-9L from African swine fever virus (isolate Tick/Malawi/Lil 20-1/1983) (ASFV).